Consider the following 360-residue polypeptide: Peptide chain release factor 1 (360 aa).

Residue Gln-235 is modified to N5-methylglutamine.

This sequence belongs to the prokaryotic/mitochondrial release factor family. In terms of processing, methylated by PrmC. Methylation increases the termination efficiency of RF1.

The protein localises to the cytoplasm. Functionally, peptide chain release factor 1 directs the termination of translation in response to the peptide chain termination codons UAG and UAA. This chain is Peptide chain release factor 1, found in Dechloromonas aromatica (strain RCB).